A 116-amino-acid polypeptide reads, in one-letter code: NADH-ubiquinone oxidoreductase chain 3 (116 aa).

The next 3 membrane-spanning stretches (helical) occupy residues 4-24, 56-76, and 88-108; these read LIITLITNSLLSTIIIIIAFW, FFLVAITFLLFDLEIALLLPL, and TLILSYCLIMLLTVGLAYEWI.

This sequence belongs to the complex I subunit 3 family. In terms of assembly, core subunit of respiratory chain NADH dehydrogenase (Complex I) which is composed of 45 different subunits. Interacts with TMEM186. Interacts with TMEM242.

The protein localises to the mitochondrion inner membrane. It carries out the reaction a ubiquinone + NADH + 5 H(+)(in) = a ubiquinol + NAD(+) + 4 H(+)(out). Its function is as follows. Core subunit of the mitochondrial membrane respiratory chain NADH dehydrogenase (Complex I) which catalyzes electron transfer from NADH through the respiratory chain, using ubiquinone as an electron acceptor. Essential for the catalytic activity of complex I. The protein is NADH-ubiquinone oxidoreductase chain 3 of Didelphis virginiana (North American opossum).